Here is a 347-residue protein sequence, read N- to C-terminus: Protein O-mannose kinase (347 aa).

Residues 1–14 (MGGTAVGGVIGVRC) lie on the Cytoplasmic side of the membrane. Residues 15 to 35 (GVPAVLLCLGALLCANVLLYF) form a helical; Signal-anchor for type II membrane protein membrane-spanning segment. Residues 36–347 (YLDALYQNTN…SQSQRVRDML (312 aa)) lie on the Lumenal side of the membrane. The Protein kinase domain occupies 79-347 (VRRVKLIGQG…SQSQRVRDML (269 aa)).

Belongs to the protein kinase superfamily. Ser/Thr protein kinase family. STKL subfamily.

It is found in the endoplasmic reticulum membrane. It catalyses the reaction 3-O-[beta-D-GalNAc-(1-&gt;3)-beta-D-GlcNAc-(1-&gt;4)-alpha-D-Man]-L-Thr-[protein] + ATP = 3-O-[beta-D-GalNAc-(1-&gt;3)-beta-D-GlcNAc-(1-&gt;4)-(O-6-P-alpha-D-Man)]-Thr-[protein] + ADP + H(+). Its function is as follows. Protein O-mannose kinase that specifically mediates phosphorylation at the 6-position of an O-mannose of the trisaccharide (N-acetylgalactosamine (GalNAc)-beta-1,3-N-acetylglucosamine (GlcNAc)-beta-1,4-mannose) to generate phosphorylated O-mannosyl trisaccharide (N-acetylgalactosamine-beta-1,3-N-acetylglucosamine-beta-1,4-(phosphate-6-)mannose). Phosphorylated O-mannosyl trisaccharide is a carbohydrate structure present in alpha-dystroglycan (dag1), which is required for binding laminin G-like domain-containing extracellular proteins with high affinity. Only shows kinase activity when the GalNAc-beta-3-GlcNAc-beta-terminus is linked to the 4-position of O-mannose, suggesting that this disaccharide serves as the substrate recognition motif. The protein is Protein O-mannose kinase (pomk) of Danio rerio (Zebrafish).